A 170-amino-acid polypeptide reads, in one-letter code: MAETTPEQPLEEIDIDSYTTESEVPVEGEYTSESMASAFGEPQPAAGLGRRKNAIARVRIVPGTGKWKVNGRTLEDYFPNKVHQQEVNEPFKVLELDNRYDVIARISGGGVSGQAGALRLGVARALNEADVDNNRGALKKAGYLKRDDRAVERKKAGLKKARKAPQYSKR.

The tract at residues 1–47 (MAETTPEQPLEEIDIDSYTTESEVPVEGEYTSESMASAFGEPQPAAG) is disordered.

This sequence belongs to the universal ribosomal protein uS9 family.

This Streptomyces coelicolor (strain ATCC BAA-471 / A3(2) / M145) protein is Small ribosomal subunit protein uS9 (rpsI).